The chain runs to 773 residues: Linolenate 9R-lipoxygenase (773 aa).

The region spanning 176-773 is the Lipoxygenase domain; the sequence is YEWVDSKKKS…LEDLMMSINI (598 aa). Fe cation contacts are provided by histidine 515, histidine 520, and isoleucine 773.

Belongs to the lipoxygenase family.

The enzyme catalyses (9Z,12Z,15Z)-octadecatrienoate + O2 = (9R,10E,12Z,15Z)-9-hydroperoxyoctadeca-10,12,15-trienoate. It functions in the pathway lipid metabolism; oxylipin biosynthesis. Functionally, catalyzes the conversion of alpha-linoleate to (9R,10E,12Z,15Z)-9-hydroperoxyoctadeca-10,12,15-trienoate in oxylipin biosynthesis. Also converts alpha-linoleate to (9R,10E,12Z)-9-hydroperoxyoctadeca-10,12-dienoate. This is Linolenate 9R-lipoxygenase from Nostoc sp. (strain PCC 7120 / SAG 25.82 / UTEX 2576).